Consider the following 209-residue polypeptide: uncharacterized protein (209 aa).

An N-terminal signal peptide occupies residues methionine 1–alanine 17. The interval alanine 17–serine 106 is disordered. A lipid anchor (N-palmitoyl cysteine) is attached at cysteine 18. Cysteine 18 is lipidated: S-diacylglycerol cysteine. A compositionally biased stretch (basic and acidic residues) spans aspartate 23–serine 70. The segment covering alanine 71 to serine 106 has biased composition (low complexity).

It localises to the cell membrane. This is an uncharacterized protein from Staphylococcus aureus (strain MRSA252).